A 318-amino-acid chain; its full sequence is Homoserine kinase (318 aa).

97 to 107 (PIGSGLGSSAC) lines the ATP pocket.

It belongs to the GHMP kinase family. Homoserine kinase subfamily.

Its subcellular location is the cytoplasm. It catalyses the reaction L-homoserine + ATP = O-phospho-L-homoserine + ADP + H(+). Its pathway is amino-acid biosynthesis; L-threonine biosynthesis; L-threonine from L-aspartate: step 4/5. Catalyzes the ATP-dependent phosphorylation of L-homoserine to L-homoserine phosphate. The protein is Homoserine kinase of Aliivibrio salmonicida (strain LFI1238) (Vibrio salmonicida (strain LFI1238)).